A 381-amino-acid chain; its full sequence is Probable tRNA sulfurtransferase (381 aa).

The 104-residue stretch at 52–155 (LTNLDALKYV…DASTYIFIDY (104 aa)) folds into the THUMP domain. ATP contacts are provided by residues 173-174 (LM), 198-199 (NF), Arg-255, Gly-277, and Gln-286.

The protein belongs to the ThiI family.

It is found in the cytoplasm. It carries out the reaction [ThiI sulfur-carrier protein]-S-sulfanyl-L-cysteine + a uridine in tRNA + 2 reduced [2Fe-2S]-[ferredoxin] + ATP + H(+) = [ThiI sulfur-carrier protein]-L-cysteine + a 4-thiouridine in tRNA + 2 oxidized [2Fe-2S]-[ferredoxin] + AMP + diphosphate. The enzyme catalyses [ThiS sulfur-carrier protein]-C-terminal Gly-Gly-AMP + S-sulfanyl-L-cysteinyl-[cysteine desulfurase] + AH2 = [ThiS sulfur-carrier protein]-C-terminal-Gly-aminoethanethioate + L-cysteinyl-[cysteine desulfurase] + A + AMP + 2 H(+). It functions in the pathway cofactor biosynthesis; thiamine diphosphate biosynthesis. Functionally, catalyzes the ATP-dependent transfer of a sulfur to tRNA to produce 4-thiouridine in position 8 of tRNAs, which functions as a near-UV photosensor. Also catalyzes the transfer of sulfur to the sulfur carrier protein ThiS, forming ThiS-thiocarboxylate. This is a step in the synthesis of thiazole, in the thiamine biosynthesis pathway. The sulfur is donated as persulfide by IscS. In Metamycoplasma arthritidis (strain 158L3-1) (Mycoplasma arthritidis), this protein is Probable tRNA sulfurtransferase.